A 432-amino-acid chain; its full sequence is NADH-quinone oxidoreductase subunit D (432 aa).

This sequence belongs to the complex I 49 kDa subunit family. NDH-1 is composed of 14 different subunits. Subunits NuoB, C, D, E, F, and G constitute the peripheral sector of the complex.

The protein resides in the cell membrane. The enzyme catalyses a quinone + NADH + 5 H(+)(in) = a quinol + NAD(+) + 4 H(+)(out). Functionally, NDH-1 shuttles electrons from NADH, via FMN and iron-sulfur (Fe-S) centers, to quinones in the respiratory chain. The immediate electron acceptor for the enzyme in this species is believed to be a menaquinone. Couples the redox reaction to proton translocation (for every two electrons transferred, four hydrogen ions are translocated across the cytoplasmic membrane), and thus conserves the redox energy in a proton gradient. In Mycobacteroides abscessus (strain ATCC 19977 / DSM 44196 / CCUG 20993 / CIP 104536 / JCM 13569 / NCTC 13031 / TMC 1543 / L948) (Mycobacterium abscessus), this protein is NADH-quinone oxidoreductase subunit D.